Reading from the N-terminus, the 347-residue chain is Holliday junction branch migration complex subunit RuvB (347 aa).

Residues Ile4–Tyr186 are large ATPase domain (RuvB-L). ATP-binding positions include Leu25, Arg26, Gly67, Lys70, Thr71, Thr72, Glu133–Phe135, Arg176, Tyr186, and Arg223. Thr71 lines the Mg(2+) pocket. The segment at Thr187 to Gly257 is small ATPAse domain (RuvB-S). Residues Glu260–Glu347 form a head domain (RuvB-H) region. DNA is bound by residues Arg315 and Arg320.

This sequence belongs to the RuvB family. As to quaternary structure, homohexamer. Forms an RuvA(8)-RuvB(12)-Holliday junction (HJ) complex. HJ DNA is sandwiched between 2 RuvA tetramers; dsDNA enters through RuvA and exits via RuvB. An RuvB hexamer assembles on each DNA strand where it exits the tetramer. Each RuvB hexamer is contacted by two RuvA subunits (via domain III) on 2 adjacent RuvB subunits; this complex drives branch migration. In the full resolvosome a probable DNA-RuvA(4)-RuvB(12)-RuvC(2) complex forms which resolves the HJ.

Its subcellular location is the cytoplasm. It catalyses the reaction ATP + H2O = ADP + phosphate + H(+). Its function is as follows. The RuvA-RuvB-RuvC complex processes Holliday junction (HJ) DNA during genetic recombination and DNA repair, while the RuvA-RuvB complex plays an important role in the rescue of blocked DNA replication forks via replication fork reversal (RFR). RuvA specifically binds to HJ cruciform DNA, conferring on it an open structure. The RuvB hexamer acts as an ATP-dependent pump, pulling dsDNA into and through the RuvAB complex. RuvB forms 2 homohexamers on either side of HJ DNA bound by 1 or 2 RuvA tetramers; 4 subunits per hexamer contact DNA at a time. Coordinated motions by a converter formed by DNA-disengaged RuvB subunits stimulates ATP hydrolysis and nucleotide exchange. Immobilization of the converter enables RuvB to convert the ATP-contained energy into a lever motion, pulling 2 nucleotides of DNA out of the RuvA tetramer per ATP hydrolyzed, thus driving DNA branch migration. The RuvB motors rotate together with the DNA substrate, which together with the progressing nucleotide cycle form the mechanistic basis for DNA recombination by continuous HJ branch migration. Branch migration allows RuvC to scan DNA until it finds its consensus sequence, where it cleaves and resolves cruciform DNA. The chain is Holliday junction branch migration complex subunit RuvB from Fervidobacterium nodosum (strain ATCC 35602 / DSM 5306 / Rt17-B1).